A 329-amino-acid polypeptide reads, in one-letter code: Sex comb on midleg-like protein 1 (329 aa).

Phosphoserine occurs at positions 138 and 238. Residues 138–157 (SPTLPVSRRENNSPSNLPRP) form a disordered region. The 68-residue stretch at 258–325 (WSVEAVVLFL…YYIDRLKQGK (68 aa)) folds into the SAM domain.

This sequence belongs to the SCM family.

Its subcellular location is the nucleus. Functionally, putative Polycomb group (PcG) protein. PcG proteins act by forming multiprotein complexes, which are required to maintain the transcriptionally repressive state of homeotic genes throughout development. May be involved in spermatogenesis during sexual maturation. This is Sex comb on midleg-like protein 1 (SCML1) from Pan troglodytes (Chimpanzee).